We begin with the raw amino-acid sequence, 240 residues long: tRNA (guanine-N(7)-)-methyltransferase (240 aa).

The segment covering 1-10 (MTESQDTPIT) has biased composition (polar residues). The disordered stretch occupies residues 1–20 (MTESQDTPITTDGEARPHRR). Glu70, Glu95, Asp122, and Asp145 together coordinate S-adenosyl-L-methionine. The active site involves Asp145. Residues Lys149, Asp181, and 218–221 (TKFE) contribute to the substrate site.

Belongs to the class I-like SAM-binding methyltransferase superfamily. TrmB family.

It catalyses the reaction guanosine(46) in tRNA + S-adenosyl-L-methionine = N(7)-methylguanosine(46) in tRNA + S-adenosyl-L-homocysteine. It participates in tRNA modification; N(7)-methylguanine-tRNA biosynthesis. Functionally, catalyzes the formation of N(7)-methylguanine at position 46 (m7G46) in tRNA. The protein is tRNA (guanine-N(7)-)-methyltransferase of Pseudomonas putida (strain W619).